Here is a 219-residue protein sequence, read N- to C-terminus: Thiopurine S-methyltransferase (219 aa).

S-adenosyl-L-methionine contacts are provided by tryptophan 10, leucine 45, glutamate 66, and arginine 123.

It belongs to the class I-like SAM-binding methyltransferase superfamily. TPMT family.

The protein localises to the cytoplasm. The enzyme catalyses S-adenosyl-L-methionine + a thiopurine = S-adenosyl-L-homocysteine + a thiopurine S-methylether.. This chain is Thiopurine S-methyltransferase, found in Shewanella pealeana (strain ATCC 700345 / ANG-SQ1).